The following is a 342-amino-acid chain: Aromatic amino acid aminotransferase (342 aa).

N6-(pyridoxal phosphate)lysine is present on lysine 214.

The protein belongs to the class-II pyridoxal-phosphate-dependent aminotransferase family. In terms of assembly, homodimer. The cofactor is pyridoxal 5'-phosphate.

The catalysed reaction is an aromatic L-alpha-amino acid + 2-oxoglutarate = an aromatic oxo-acid + L-glutamate. Aminotransferase that catalyzes the conversion of aromatic amino acids and 2-oxoglutarate into corresponding aromatic oxo acids and L-glutamate. This is Aromatic amino acid aminotransferase from Corynebacterium efficiens (strain DSM 44549 / YS-314 / AJ 12310 / JCM 11189 / NBRC 100395).